Reading from the N-terminus, the 1308-residue chain is Cilia- and flagella-associated protein 57 C (1308 aa).

7 WD repeats span residues 57–99, 110–154, 415–454, 504–546, 551–590, 645–689, and 694–733; these read NEYR…RRKN, YNIK…KCLG, NHTG…IKIS, SPFK…NPSQ, GHTG…QHQQ, LLDI…GKFT, and HDER…ARGM. Residues 779-1000 adopt a coiled-coil conformation; the sequence is LNSRDDRIRQ…RDKIDGQKKI (222 aa).

The protein belongs to the CFAP57 family. As to quaternary structure, forms a heterodimer with CFAP57A. Associates with components of the nexin-dynein regulatory complex (N-DRC) and the CFAP184:CFAP263 complex.

It is found in the cell projection. The protein resides in the cilium. In terms of biological role, associates with components of the nexin-dynein regulatory complex (N-DRC), a key regulator of ciliary/flagellar motility, and might act as an inner dynein arm (IDA) hub or linkage. The chain is Cilia- and flagella-associated protein 57 C (CFAP57C) from Tetrahymena thermophila (strain SB210).